The sequence spans 598 residues: Fumarate reductase flavoprotein subunit (598 aa).

FAD contacts are provided by residues 12-16 (GAGGA), 36-38 (ISK), 44-52 (SHTVAAEGG), 156-158 (HFV), and aspartate 212. Histidine 45 bears the Tele-8alpha-FAD histidine mark. Residues histidine 233 and arginine 249 contribute to the active site. Residues 356–357 (HY), glutamate 380, and 391–397 (RLGSNSL) each bind FAD. A disordered region spans residues 577–598 (AKRVYGGEADAQEKSDKEQANG). A compositionally biased stretch (basic and acidic residues) spans 587–598 (AQEKSDKEQANG).

Belongs to the FAD-dependent oxidoreductase 2 family. FRD/SDH subfamily. As to quaternary structure, part of an enzyme complex containing four subunits: a flavoprotein (FrdA), an iron-sulfur protein (FrdB), and two hydrophobic anchor proteins (FrdC and FrdD). Interacts with SdhE. FAD serves as cofactor.

It localises to the cell inner membrane. The catalysed reaction is a quinone + succinate = fumarate + a quinol. It catalyses the reaction a menaquinone + succinate = a menaquinol + fumarate. In terms of biological role, two distinct, membrane-bound, FAD-containing enzymes are responsible for the catalysis of fumarate and succinate interconversion; the fumarate reductase is used in anaerobic growth, and the succinate dehydrogenase is used in aerobic growth. In Serratia sp. (strain ATCC 39006) (Prodigiosinella confusarubida), this protein is Fumarate reductase flavoprotein subunit.